The sequence spans 906 residues: MKLGYGEFSWPTGEAYHGQFYRDHFHGLGTYTWPDGSSFTGTFYLSQREGYGTMHTKTMLFQGLYKEDQRFGPGIETYPDGSQDVGLWFREYLLKLCTRVPSGFSLVNYPEFLAFLTKSRRRLDLSDEKVELGLSEEQDPFFYDYKQYLLNDELKLPPEMHVYSTDNSHLPMTDSLRQELDDHIFMNEIPPFIEDEEPWLITNETPLLVKIQKQTYKFRNKDAHTSWNIPAILEGNRSRFGPSGPKEQISKKMIMKAEEGDYNWIFGILRDNLACADVADSKGYTVLAAAAMHSHLDIVNLLLDFGADVNKRSDEGITPLSMCFLQYYPCKSFHPNIAERTLLQESPKSLVTPKISFLLADANIDYLYDVGMPIAGGDELKTSSLDDSLASMQTPESSNMLHKEEVSPVKTVSTDVEKESEGAAENVDASTLYSVDTNFESTKCLRNYTINVSRDIMEKSAQAYSSLPQHPCFPYKGTVRKMAQSMVERRNRWMTITLLLRRGADPNLCQVPMQALFLAVKAGDVEGVRLLLMSGAQTDIQFPPQLQSLTPLHIAVSLPGEEGVKITELLLHVITNVDAKAADEDYVYKGGKADLLPSSLKLNNEPGPPKSFYSTHTFIPEEGGRTALHVACEREDNKKCARDIVRLLLSHRANPNVLWSGHSPLSLAIASGNDLVVKELLSQGADPNLPLTKGLGTALCVVCDLVYEQQRSVENKIALIDRLISYGADVLNPVTLVQGDRTAVGTAVDYGYFKFFQDRKIAHCPFHALMPAEREVFMARKRLLEYLGLQLRLAVLSKESRLDTKALYLSKRAELAPCHRLKKKGSSSVRTQSSEKQSIPFYKFCYQCGRSIGVRLSPCPRCYGILTCSKYCKTKAWIEFHKKDCNDIMAMIPHLEGSAWRVAESP.

MORN repeat units follow at residues Y16 to S38, F39 to M59, and F61 to Q83. One copy of the ANK 1 repeat lies at K282–K311. The segment covering S391–M400 has biased composition (polar residues). The tract at residues S391–T411 is disordered. ANK repeat units lie at residues V479–L508, V511–I540, Q547–A579, G623–V657, S660–L689, and V701–N732. Zn(2+)-binding residues include C845, C848, C859, C862, C868, C872, H881, and C885. Residues C845 to C885 form an MYND-type zinc finger.

This chain is Ankyrin repeat and MYND domain-containing protein 1 (Ankmy1), found in Mus musculus (Mouse).